Consider the following 207-residue polypeptide: MTPRQEQLIALGAIFESAYLVDRIAKTGLAGEAHLACMLGSLLVRNPKDTLEVYGGDDLNLLDGYRALASALERNPQSLQREPLRYSLALVTLERQLDKRDDMLQLMGRRLDQIQLQVQHLGLTHESVVAAFASLYEDTLSTFRQRIQVHGEMRHLQNPANAARIRALLLAGIRSARLWRQLGGHRWQLVFSRRKLLDELYPLIRRN.

Belongs to the HflD family.

The protein localises to the cytoplasm. Its subcellular location is the cell inner membrane. The polypeptide is High frequency lysogenization protein HflD homolog (Azotobacter vinelandii (strain DJ / ATCC BAA-1303)).